Reading from the N-terminus, the 456-residue chain is Palmitoyltransferase PFA4 (456 aa).

Residues M1–V9 lie on the Cytoplasmic side of the membrane. A helical transmembrane segment spans residues W10 to I30. The Lumenal segment spans residues W31–E37. The helical transmembrane segment at I38–W58 threads the bilayer. Topologically, residues N59–G138 are cytoplasmic. The 51-residue stretch at R95–L145 folds into the DHHC domain. Catalysis depends on C125, which acts as the S-palmitoyl cysteine intermediate. A helical membrane pass occupies residues H139–V159. Over R160–D176 the chain is Lumenal. A helical membrane pass occupies residues V177 to F197. Residues S198–H456 lie on the Cytoplasmic side of the membrane. Residues P284 to Y377 are disordered. Residues P285–P298 are compositionally biased toward pro residues. Polar residues predominate over residues N309–L321. Residues S337–N352 are compositionally biased toward basic and acidic residues.

This sequence belongs to the DHHC palmitoyltransferase family. PFA4 subfamily.

The protein localises to the endoplasmic reticulum membrane. It catalyses the reaction L-cysteinyl-[protein] + hexadecanoyl-CoA = S-hexadecanoyl-L-cysteinyl-[protein] + CoA. Mediates the reversible addition of palmitate to target proteins, thereby regulating their membrane association and biological function. Responsible for the modification of a subset of proteins that are critical in cryptococcal pathogenesis, with substrates involved in cell wall synthesis, signal transduction, and membrane trafficking. Palmitoylates chitin synthase CHS3. This is Palmitoyltransferase PFA4 from Cryptococcus neoformans var. grubii serotype A (strain H99 / ATCC 208821 / CBS 10515 / FGSC 9487) (Filobasidiella neoformans var. grubii).